The primary structure comprises 390 residues: Putative nickel insertion protein (390 aa).

The protein belongs to the LarC family.

The protein is Putative nickel insertion protein of Myxococcus xanthus (strain DK1622).